Consider the following 67-residue polypeptide: Large ribosomal subunit protein bL35 (67 aa).

The segment at 22–45 (GKIKRWKSGGAHYNTKKSSKRKRH) is disordered. The segment covering 35–45 (NTKKSSKRKRH) has biased composition (basic residues).

Belongs to the bacterial ribosomal protein bL35 family.

In Aquifex aeolicus (strain VF5), this protein is Large ribosomal subunit protein bL35.